Here is a 284-residue protein sequence, read N- to C-terminus: GPN-loop GTPase 3 (284 aa).

13 to 18 is a GTP binding site; the sequence is GSGKST. Positions 72-74 match the Gly-Pro-Asn (GPN)-loop; involved in dimer interface motif; it reads GPN. 174–177 contributes to the GTP binding site; that stretch reads TKMD.

Belongs to the GPN-loop GTPase family. As to quaternary structure, heterodimer with GPN1. Binds to RNA polymerase II (RNAPII). Interacts directly with subunits RPB4 and RPB7 and the CTD of RPB1.

Its function is as follows. Small GTPase required for proper localization of RNA polymerase II (RNAPII). May act at an RNAP assembly step prior to nuclear import. This chain is GPN-loop GTPase 3, found in Homo sapiens (Human).